A 292-amino-acid polypeptide reads, in one-letter code: Ephrin type-A receptor 4a (292 aa).

ATP is bound by residues 1-9 (IGIGEFGEV) and K27. In terms of domain architecture, Protein kinase spans 1–265 (IGIGEFGEVC…QIVNMLDKLI (265 aa)). D120 functions as the Proton acceptor in the catalytic mechanism. Y153 carries the post-translational modification Phosphotyrosine; by autocatalysis.

This sequence belongs to the protein kinase superfamily. Tyr protein kinase family. Ephrin receptor subfamily. Widely expressed in the developing nervous system.

Its subcellular location is the cell membrane. The protein localises to the early endosome. The catalysed reaction is L-tyrosyl-[protein] + ATP = O-phospho-L-tyrosyl-[protein] + ADP + H(+). Its function is as follows. Receptor tyrosine kinase which binds membrane-bound ephrin family ligands residing on adjacent cells, leading to contact-dependent bidirectional signaling into neighboring cells. The signaling pathway downstream of the receptor is referred to as forward signaling while the signaling pathway downstream of the ephrin ligand is referred to as reverse signaling. Highly promiscuous, it has the unique property among Eph receptors to bind and to be physiologically activated by both GPI-anchored ephrin-A and transmembrane ephrin-B ligands including efna1 and efnb3. Upon activation by ephrin ligands, modulates cell morphology and integrin-dependent cell adhesion through regulation of the Rac, Rap and Rho GTPases activity. Plays an important role in the development of the nervous system controlling different steps of axonal guidance including the establishment of the corticospinal projections. This is Ephrin type-A receptor 4a (epha4a) from Danio rerio (Zebrafish).